The following is a 96-amino-acid chain: uncharacterized protein (96 aa).

The N-linked (GlcNAc...) asparagine glycan is linked to Asn4. A helical membrane pass occupies residues 59-81 (VFFTIFDTIITIIVRSGIPFPLL).

The protein localises to the membrane. This is an uncharacterized protein from Saccharomyces cerevisiae (strain ATCC 204508 / S288c) (Baker's yeast).